Consider the following 451-residue polypeptide: Serine--tRNA ligase (451 aa).

Residue 258–260 (TSE) participates in L-serine binding. 289–291 (RSE) is an ATP binding site. E312 contributes to the L-serine binding site. 376-379 (EISS) contacts ATP. S411 provides a ligand contact to L-serine.

The protein belongs to the class-II aminoacyl-tRNA synthetase family. Type-1 seryl-tRNA synthetase subfamily. In terms of assembly, homodimer. The tRNA molecule binds across the dimer.

It localises to the cytoplasm. It carries out the reaction tRNA(Ser) + L-serine + ATP = L-seryl-tRNA(Ser) + AMP + diphosphate + H(+). The catalysed reaction is tRNA(Sec) + L-serine + ATP = L-seryl-tRNA(Sec) + AMP + diphosphate + H(+). It functions in the pathway aminoacyl-tRNA biosynthesis; selenocysteinyl-tRNA(Sec) biosynthesis; L-seryl-tRNA(Sec) from L-serine and tRNA(Sec): step 1/1. Functionally, catalyzes the attachment of serine to tRNA(Ser). Is also able to aminoacylate tRNA(Sec) with serine, to form the misacylated tRNA L-seryl-tRNA(Sec), which will be further converted into selenocysteinyl-tRNA(Sec). This Bordetella bronchiseptica (strain ATCC BAA-588 / NCTC 13252 / RB50) (Alcaligenes bronchisepticus) protein is Serine--tRNA ligase.